Reading from the N-terminus, the 373-residue chain is Queuine tRNA-ribosyltransferase (373 aa).

Catalysis depends on Asp93, which acts as the Proton acceptor. Residues 93 to 97 (DSGGF), Asp147, Gln190, and Gly219 contribute to the substrate site. The segment at 250-256 (GVGEPVD) is RNA binding. Residue Asp269 is the Nucleophile of the active site. The segment at 274–278 (TRLAR) is RNA binding; important for wobble base 34 recognition. The Zn(2+) site is built by Cys307, Cys309, Cys312, and His338.

It belongs to the queuine tRNA-ribosyltransferase family. Homodimer. Within each dimer, one monomer is responsible for RNA recognition and catalysis, while the other monomer binds to the replacement base PreQ1. Zn(2+) is required as a cofactor.

The catalysed reaction is 7-aminomethyl-7-carbaguanine + guanosine(34) in tRNA = 7-aminomethyl-7-carbaguanosine(34) in tRNA + guanine. The protein operates within tRNA modification; tRNA-queuosine biosynthesis. In terms of biological role, catalyzes the base-exchange of a guanine (G) residue with the queuine precursor 7-aminomethyl-7-deazaguanine (PreQ1) at position 34 (anticodon wobble position) in tRNAs with GU(N) anticodons (tRNA-Asp, -Asn, -His and -Tyr). Catalysis occurs through a double-displacement mechanism. The nucleophile active site attacks the C1' of nucleotide 34 to detach the guanine base from the RNA, forming a covalent enzyme-RNA intermediate. The proton acceptor active site deprotonates the incoming PreQ1, allowing a nucleophilic attack on the C1' of the ribose to form the product. After dissociation, two additional enzymatic reactions on the tRNA convert PreQ1 to queuine (Q), resulting in the hypermodified nucleoside queuosine (7-(((4,5-cis-dihydroxy-2-cyclopenten-1-yl)amino)methyl)-7-deazaguanosine). The sequence is that of Queuine tRNA-ribosyltransferase from Fusobacterium nucleatum subsp. nucleatum (strain ATCC 25586 / DSM 15643 / BCRC 10681 / CIP 101130 / JCM 8532 / KCTC 2640 / LMG 13131 / VPI 4355).